The sequence spans 301 residues: uncharacterized protein (301 aa).

It belongs to the asfivirus E301R family. As to quaternary structure, interacts with host IRF3.

Plays a role in the inhibition of host innate immune system by acting as a negatively regulator of type I interferon production. Mechanistically, interacts with and prevents host IRF3 nuclear localization to inhibit its transcriptional activity. This is an uncharacterized protein from African swine fever virus (isolate Pig/Kenya/KEN-50/1950) (ASFV).